Consider the following 183-residue polypeptide: Lipid droplet coating protein mpl1 (183 aa).

It belongs to the perilipin family.

It localises to the lipid droplet. Lipid droplet coating protein that regulates lipid metabolism, appressorial turgor pressure, and virulence. Appressorial turgor pressure is important for breaching the insect cuticle during infection. The protein is Lipid droplet coating protein mpl1 of Metarhizium robertsii (strain ARSEF 23 / ATCC MYA-3075) (Metarhizium anisopliae (strain ARSEF 23)).